A 2136-amino-acid polypeptide reads, in one-letter code: Protein Ycf2 (2136 aa).

1404 to 1411 (GPIETGRS) provides a ligand contact to ATP.

This sequence belongs to the Ycf2 family.

The protein localises to the plastid. It localises to the chloroplast stroma. In terms of biological role, probable ATPase of unknown function. Its presence in a non-photosynthetic plant (Epifagus virginiana) and experiments in tobacco indicate that it has an essential function which is probably not related to photosynthesis. The polypeptide is Protein Ycf2 (Marchantia polymorpha (Common liverwort)).